The primary structure comprises 520 residues: MSSSENTLLDGKSENTIRFLTFNVNGIRTFFHYQPFSQMNQSLRSVFDFFRADIITFQELKTEKLSISKWGRVDGFYSFISIPQTRKGYSGVGCWIRIPEKNHPLYHALQVVKAEEGITGYLTIKNGKHSAISYRNDVNQGIGGYDSLDPDLDEKSALELDSEGRCVMVELACGIVIISVYCPANSNSSEEGEMFRLRFLKVLLRRVRNLDKIGKKIVLMGDVNVCRDLIDSADTLEQFSIPITDPMGGTKLEAQYRDKAIQFIINPDTPHRRIFNQILADSLLPDASKRGILIDTTRLIQTRNRLKMYTVWNMLKNLRPSNYGSRIDFILVSLKLERCIKAADILPDILGSDHCPVYSDLDILDDRIEPGTTQVPIPKFEARYKYNLRNHNVLEMFAKKDTNKESNKQKYCVSKVMNTKKNSNIKNKSLDSFFQKVNGEKDDRIKESSEIPQQAKKRISTPKLNFKDVFGKPPLCRHGEESMLKTSKTSANPGRKFWICKRSRGDSNNTESSCGFFQWV.

Glu-59 serves as a coordination point for Mg(2+). Tyr-181 is an active-site residue. Residues Asp-222, Asn-224, and Asp-353 each contribute to the Mg(2+) site. The Proton donor/acceptor role is filled by Asp-222. Cys-476, His-478, Cys-500, and Cys-514 together coordinate Zn(2+). The GRF-type zinc finger occupies 476–520 (CRHGEESMLKTSKTSANPGRKFWICKRSRGDSNNTESSCGFFQWV).

Belongs to the DNA repair enzymes AP/ExoA family. It depends on Mg(2+) as a cofactor. Requires Mn(2+) as cofactor.

The protein resides in the nucleus. It catalyses the reaction Exonucleolytic cleavage in the 3'- to 5'-direction to yield nucleoside 5'-phosphates.. Functionally, DNA repair enzyme that cleaves apurinic/apyrimidinic (AP) sites and removes 3'-blocking groups present at single strand breaks of damaged DNA. The chain is DNA-(apurinic or apyrimidinic site) endonuclease 2 (APN2) from Saccharomyces cerevisiae (strain ATCC 204508 / S288c) (Baker's yeast).